Here is a 704-residue protein sequence, read N- to C-terminus: Zinc finger protein MSN2 (704 aa).

The tract at residues 84 to 246 is disordered; the sequence is PSTTDNSLHL…SISNSNSNST (163 aa). Over residues 91–112 the composition is skewed to basic and acidic residues; it reads LHLKADSNKNRDARTIENDSEI. A compositionally biased stretch (polar residues) spans 113–133; the sequence is KSTNNASGSGANQYTTLTSPY. Low complexity predominate over residues 141–166; the sequence is NMNNPLQSPSPSSVPQNPTINPPINT. Composition is skewed to polar residues over residues 167-193 and 204-220; these read ASNETNLSPQTSNGNETLISPRAQQHT and NGANSNLFIDTNPNNLN. A compositionally biased stretch (low complexity) spans 228 to 246; it reads NSDTNSYSNSISNSNSNST. The 9aaTAD signature appears at 261–269; sequence SMLDDYVSS. Ser-288 and Ser-304 each carry phosphoserine. Residues 418 to 437 form a disordered region; the sequence is NRVQHKQLTSSHNNSSTNMK. Polar residues predominate over residues 426 to 437; the sequence is TSSHNNSSTNMK. 2 positions are modified to phosphoserine: Ser-451 and Ser-582. The disordered stretch occupies residues 592 to 634; sequence LTNQQNNISSSSVNSTGNGAGVTKERRPSYRRKSMTPSRRSSV. Low complexity predominate over residues 593 to 608; sequence TNQQNNISSSSVNSTG. Residue Ser-633 is modified to Phosphoserine. 2 consecutive C2H2-type zinc fingers follow at residues 647–665 and 676–698; these read FHCHICPKSFKRSEHLKRH and FACHICDKKFSRSDNLSQHIKTH.

Interacts with WHI2.

The protein localises to the cytoplasm. The protein resides in the nucleus. In terms of biological role, positive transcriptional factor that acts as a component of the stress responsive system. Recognizes and binds to the stress response element (STRE) which is involved in the response to various forms of stress (heat, oxidative, osmotic, etc.). Involved in the regulation of the CTT1, DDR2, HSP12 genes. May be regulated via WHI2-PSR1 complex phosphatase activity. This is Zinc finger protein MSN2 (MSN2) from Saccharomyces cerevisiae (strain ATCC 204508 / S288c) (Baker's yeast).